We begin with the raw amino-acid sequence, 714 residues long: Fatty acid oxidation complex subunit alpha (714 aa).

Residues Met1–Pro190 form an enoyl-CoA hydratase region. Residues Ala306–Gln714 are 3-hydroxyacyl-CoA dehydrogenase.

This sequence in the N-terminal section; belongs to the enoyl-CoA hydratase/isomerase family. In the central section; belongs to the 3-hydroxyacyl-CoA dehydrogenase family. Heterotetramer of two alpha chains (FadJ) and two beta chains (FadI).

The protein localises to the cytoplasm. The enzyme catalyses a (3S)-3-hydroxyacyl-CoA = a (2E)-enoyl-CoA + H2O. The catalysed reaction is a 4-saturated-(3S)-3-hydroxyacyl-CoA = a (3E)-enoyl-CoA + H2O. It carries out the reaction a (3S)-3-hydroxyacyl-CoA + NAD(+) = a 3-oxoacyl-CoA + NADH + H(+). It catalyses the reaction (3S)-3-hydroxybutanoyl-CoA = (3R)-3-hydroxybutanoyl-CoA. It functions in the pathway lipid metabolism; fatty acid beta-oxidation. Its function is as follows. Catalyzes the formation of a hydroxyacyl-CoA by addition of water on enoyl-CoA. Also exhibits 3-hydroxyacyl-CoA epimerase and 3-hydroxyacyl-CoA dehydrogenase activities. The protein is Fatty acid oxidation complex subunit alpha of Escherichia coli (strain ATCC 8739 / DSM 1576 / NBRC 3972 / NCIMB 8545 / WDCM 00012 / Crooks).